The primary structure comprises 477 residues: Proton-coupled amino acid transporter 3 (477 aa).

The span at 1 to 13 (MGKTPLLREDGRC) shows a compositional bias: basic and acidic residues. The disordered stretch occupies residues 1-42 (MGKTPLLREDGRCQRNTFGGSKASSKGSSSSSSNNTVSSKKK). Residues 1–54 (MGKTPLLREDGRCQRNTFGGSKASSKGSSSSSSNNTVSSKKKPRRKADALMFIQ) are Cytoplasmic-facing. Residues 19–38 (GGSKASSKGSSSSSSNNTVS) show a composition bias toward low complexity. A helical transmembrane segment spans residues 55 to 75 (IFIHLLKSNIGTGFLGLPLAV). At 76–77 (KN) the chain is on the extracellular side. A helical transmembrane segment spans residues 78–98 (AGLLVGPVSLLAIGALTVHCM). At 99-144 (DILLNCACHLTSRLQRSFVNYEETTMYSLETCPSPWLRTHSVWGRY) the chain is on the cytoplasmic side. Residues 145-165 (VVSFLLIVTQLGFCSVYFMFM) form a helical membrane-spanning segment. Residues 166-202 (ADNLQQIVEEAHFTSNVCQPRQSLVMTSILDTRFYML) are Extracellular-facing. The helical transmembrane segment at 203–223 (TILPFLILLVLVQNPQVLSIF) threads the bilayer. Residues 224–225 (ST) are Cytoplasmic-facing. The helical transmembrane segment at 226-246 (LATITTLSSLALIFEYLIQIP) threads the bilayer. Over 247–259 (HHSHLPLVASWKT) the chain is Extracellular. A helical membrane pass occupies residues 260–280 (FLLFFGTAIFTFEGVGMVLPL). The Cytoplasmic segment spans residues 281 to 291 (KSQMKSPQQFP). A helical transmembrane segment spans residues 292–312 (AVLYLGMSFVIFLYICLGTLG). Residues 313 to 344 (YMKFGADTQASITLNLPNCWLYQSVKLMYSVG) are Extracellular-facing. A helical transmembrane segment spans residues 345–365 (IFFTYALQFHVPAEIIVPYVV). Topologically, residues 366-374 (SRASENWAL) are cytoplasmic. The helical transmembrane segment at 375–395 (FIDLTVRAALVCLTCFSAVLI) threads the bilayer. At 396–399 (PRLD) the chain is on the extracellular side. A helical membrane pass occupies residues 400 to 420 (LVISLVGSVSSSALALIIPPL). At 421 to 439 (LEIATFYSENISCTTIAKD) the chain is on the cytoplasmic side. Residues 440–460 (IMISILGLLGCVLGTYQALYE) form a helical membrane-spanning segment. Residues 461–477 (MTQQSRFPMLNSTNVHT) are Extracellular-facing.

This sequence belongs to the amino acid/polyamine transporter 2 family.

It localises to the membrane. The sequence is that of Proton-coupled amino acid transporter 3 (Slc36a3) from Rattus norvegicus (Rat).